Consider the following 330-residue polypeptide: NmrA-like family domain-containing oxidoreductase notO (330 aa).

NADP(+) is bound by residues Val12–Leu17, His38–Gln42, Arg59–Ser60, Ile80–Ala82, and Leu160–Gly163. Residues Val12–Ile32 form a helical membrane-spanning segment. The segment at Ser158–Ala202 is interaction with ASS1. N-linked (GlcNAc...) asparagine glycosylation is found at Asn180 and Asn207.

Belongs to the NmrA-type oxidoreductase family.

It localises to the membrane. NmrA-like family domain-containing oxidoreductase; part of the gene cluster that mediates the biosynthesis of notoamide, a fungal indole alkaloid that belongs to a family of natural products containing a characteristic bicyclo[2.2.2]diazaoctane core. The first step of notoamide biosynthesis involves coupling of L-proline and L-tryptophan by the bimodular NRPS notE, to produce cyclo-L-tryptophan-L-proline called brevianamide F. The reverse prenyltransferase notF then acts as a deoxybrevianamide E synthase and converts brevianamide F to deoxybrevianamide E via reverse prenylation at C-2 of the indole ring leading to the bicyclo[2.2.2]diazaoctane core. Deoxybrevianamide E is further hydroxylated at C-6 of the indole ring, likely catalyzed by the cytochrome P450 monooxygenase notG, to yield 6-hydroxy-deoxybrevianamide E. 6-hydroxy-deoxybrevianamide E is a specific substrate of the prenyltransferase notC for normal prenylation at C-7 to produce 6-hydroxy-7-prenyl-deoxybrevianamide, also called notoamide S. As the proposed pivotal branching point in notoamide biosynthesis, notoamide S can be diverted to notoamide E through an oxidative pyran ring closure putatively catalyzed by either notH cytochrome P450 monooxygenase or the notD FAD-linked oxidoreductase. This step would be followed by an indole 2,3-epoxidation-initiated pinacol-like rearrangement catalyzed by the notB FAD-dependent monooxygenase leading to the formation of notoamide C and notoamide D. On the other hand notoamide S is converted to notoamide T by notH (or notD), a bifunctional oxidase that also functions as the intramolecular Diels-Alderase responsible for generation of (+)-notoamide T. To generate antipodal (-)-notoaminide T, notH' (or notD') in Aspergillus versicolor is expected to catalyze a Diels-Alder reaction leading to the opposite stereochemistry. The remaining oxidoreductase notD (or notH) likely catalyzes the oxidative pyran ring formation to yield (+)-stephacidin A. The FAD-dependent monooxygenase notI is highly similar to notB and is predicted to catalyze a similar conversion from (+)-stephacidin A to (-)-notoamide B via the 2,3-epoxidation of (+)-stephacidin A followed by a pinacol-type rearrangement. Finally, it remains unclear which enzyme could be responsible for the final hydroxylation steps leading to notoamide A and sclerotiamide. The function of notO in the notoamide biosynthesis has not been determined yet. The polypeptide is NmrA-like family domain-containing oxidoreductase notO (Aspergillus sp. (strain MF297-2)).